A 211-amino-acid polypeptide reads, in one-letter code: Rho-related GTP-binding protein RhoF (211 aa).

At Met-1 the chain carries N-acetylmethionine. Residue 26 to 33 (GDGGCGKT) participates in GTP binding. The Effector region motif lies at 48–56 (YAPSVFEKY). Residues 73–77 (DTAGQ) and 131–134 (CKTD) contribute to the GTP site. Cys-208 carries the cysteine methyl ester modification. Cys-208 carries the S-geranylgeranyl cysteine lipid modification. Residues 209 to 211 (LLL) constitute a propeptide, removed in mature form.

The protein belongs to the small GTPase superfamily. Rho family.

It is found in the cell membrane. The protein localises to the cytoplasm. The protein resides in the cytoskeleton. In terms of biological role, plasma membrane-associated small GTPase which cycles between an active GTP-bound and an inactive GDP-bound state. Causes the formation of thin, actin-rich surface projections called filopodia. Functions cooperatively with CDC42 and Rac to generate additional structures, increasing the diversity of actin-based morphology. This chain is Rho-related GTP-binding protein RhoF (Rhof), found in Mus musculus (Mouse).